A 686-amino-acid chain; its full sequence is MEKKAKPGFWDKKILGTAVKGAFIKLNPVYMVKNPVMFVVEIGAIISLALCFFPNLFGGNNQDMILYNSLVFIILLLTLLFANFSESVAEGRGKAQAASLKQTQQDMQARLILNGKEKVVNANTLKKGDIVLVNMGEVIPSDGEIIEGVASVDESAITGESAPVLKESGGDFASVTGGTTVASDYLKIQITSNPGESFIDKMIQLVEGASRKKTPNEIALSTLLVSLTIIFLIVIVSLYPMAIYTGIKLPVSTLVALTVCLIPTTIGGLLSAIGIAGMDRVTRFNVIALSGKAVEACGDVDTMILDKTGTITYGNRMASEFIALDKGNKNYLIHYAILASIQDNTPEGKSIVTLGKDLLKEDLDTNDIRENQFIEFTAQTRMSGVDLADGTRIRKGAYDAIIKYIKNIGGEIPHDLEDKVNNISKLGGTPLVVCAEEKIYGVIYLKDTIKPGLVERFERLRSIGIKTIMCTGDNPLTAATIAHEAGVDSFIAECKPEDKIKVIKDAQSKSKVVAMTGDGTNDAPALAQADVGIAMNSGTTAAKEAANMVDLDSDPTKILDVVEIGKQLLITRGALTTFSIANDIAKYFAIIPAMFLAIIPQMQVLNIMHLSSSYSAILSALIFNAIIIPCLIPLAMKGVKYKLQRSEKMLAHNMLVYGVGGMIVPFIGIKLIDLVIAPLLTMMGLG.

4 helical membrane-spanning segments follow: residues 37–57 (MFVV…PNLF), 64–84 (MILY…FANF), 223–243 (LLVS…PMAI), and 255–275 (VALT…AIGI). The active-site 4-aspartylphosphate intermediate is the D306. ATP-binding positions include D343, E347, 376–383 (FTAQTRMS), and K395. Mg(2+)-binding residues include D518 and D522. 3 consecutive transmembrane segments (helical) span residues 588–608 (FAII…LNIM), 616–636 (AILS…PLAM), and 656–676 (VYGV…DLVI).

Belongs to the cation transport ATPase (P-type) (TC 3.A.3) family. Type IA subfamily. As to quaternary structure, the system is composed of three essential subunits: KdpA, KdpB and KdpC.

The protein resides in the cell membrane. It catalyses the reaction K(+)(out) + ATP + H2O = K(+)(in) + ADP + phosphate + H(+). In terms of biological role, part of the high-affinity ATP-driven potassium transport (or Kdp) system, which catalyzes the hydrolysis of ATP coupled with the electrogenic transport of potassium into the cytoplasm. This subunit is responsible for energy coupling to the transport system and for the release of the potassium ions to the cytoplasm. This is Potassium-transporting ATPase ATP-binding subunit 2 from Listeria innocua serovar 6a (strain ATCC BAA-680 / CLIP 11262).